A 398-amino-acid polypeptide reads, in one-letter code: Calreticulin (398 aa).

Positions methionine 1–cysteine 19 are cleaved as a signal peptide. The segment at aspartate 20 to glutamate 197 is N-domain. Cysteine 105 and cysteine 137 are joined by a disulfide. An alpha-D-glucoside-binding residues include tyrosine 109, lysine 111, tyrosine 128, and aspartate 135. Repeat copies occupy residues valine 191–phenylalanine 202, aspartate 210–aspartate 221, aspartate 227–lysine 238, aspartate 244–aspartate 255, glycine 259–proline 269, glycine 273–proline 283, and glycine 287–proline 297. The interval valine 191–aspartate 255 is 4 X approximate repeats. The tract at residues alanine 198 to arginine 308 is P-domain. Residues lysine 207–glutamate 251 show a composition bias toward basic and acidic residues. The disordered stretch occupies residues lysine 207–methionine 257. A 3 X approximate repeats region spans residues glycine 259–proline 297. The interval aspartate 309–leucine 398 is C-domain. Residue aspartate 317 participates in an alpha-D-glucoside binding. Positions aspartate 334–leucine 398 are disordered. The segment covering alanine 337–lysine 372 has biased composition (basic and acidic residues). Acidic residues predominate over residues proline 373–glycine 387. The Prevents secretion from ER signature appears at histidine 395–leucine 398.

The protein belongs to the calreticulin family. As to quaternary structure, monomer. Expressed in fat bodies. Not expressed in midgut, silk gland, ovary or testis.

It is found in the endoplasmic reticulum lumen. Molecular calcium-binding chaperone promoting folding, oligomeric assembly and quality control in the ER via the calreticulin/calnexin cycle. This lectin may interact transiently with almost all of the monoglucosylated glycoproteins that are synthesized in the ER. The protein is Calreticulin of Bombyx mori (Silk moth).